A 312-amino-acid polypeptide reads, in one-letter code: Ribosomal RNA small subunit methyltransferase H (312 aa).

Residues 35–37, Asp55, Phe80, Asp102, and Gln109 each bind S-adenosyl-L-methionine; that span reads GGH.

This sequence belongs to the methyltransferase superfamily. RsmH family.

Its subcellular location is the cytoplasm. It catalyses the reaction cytidine(1402) in 16S rRNA + S-adenosyl-L-methionine = N(4)-methylcytidine(1402) in 16S rRNA + S-adenosyl-L-homocysteine + H(+). Functionally, specifically methylates the N4 position of cytidine in position 1402 (C1402) of 16S rRNA. The sequence is that of Ribosomal RNA small subunit methyltransferase H from Pseudoalteromonas translucida (strain TAC 125).